A 934-amino-acid chain; its full sequence is Sorting nexin-14 (934 aa).

Helical transmembrane passes span 27–47 (YPVI…LNQY) and 48–68 (LHIL…YCSL). A PXA domain is found at 129–303 (PSKVDASISE…MVLIFIDDSP (175 aa)). The region spanning 335 to 467 (DLKEIREQQD…CHSDEYFRHL (133 aa)) is the RGS domain. The PX domain maps to 557–677 (WTISIPYVDF…DFLSPFSMES (121 aa)).

It belongs to the sorting nexin family.

The protein localises to the lysosome membrane. It localises to the late endosome membrane. The protein resides in the cell projection. Its subcellular location is the dendrite. In terms of biological role, plays a role in maintaining normal neuronal excitability and synaptic transmission. May be involved in several stages of intracellular trafficking. Required for autophagosome clearance, possibly by mediating the fusion of lysosomes with autophagosomes. Binds phosphatidylinositol 3,5-bisphosphate (PtdIns(3,5)P2), a key component of late endosomes/lysosomes. Does not bind phosphatidylinositol 3-phosphate (PtdIns(3P)). This is Sorting nexin-14 from Danio rerio (Zebrafish).